The sequence spans 106 residues: uncharacterized protein (106 aa).

Belongs to the csb family.

This is an uncharacterized protein from Dictyostelium discoideum (Social amoeba).